Here is a 379-residue protein sequence, read N- to C-terminus: F-box protein At1g67340 (379 aa).

The F-box domain occupies 41–92 (ADLLDSIPDDLVISILCKLGSTSRCPADFINVLLTCKRLKGLAMNPIVLSRL). The Zn(2+) site is built by His304, Cys307, Cys320, Cys323, Cys329, Cys333, His342, and Cys346. The segment at 304 to 346 (HAGCGRPETRKHEFRRCSVCGVVNYCSRACQALDWKLRHKMDC) adopts an MYND-type; atypical zinc-finger fold. The interval 358-379 (GGEGNVQIDGNGNGDNVLLPMS) is disordered.

Part of a SCF (ASK-cullin-F-box) protein ligase complex. Interacts with SKP1A/ASK1, SKP1B/ASK2, ASK4, ASK11 and ASK13.

It is found in the nucleus. It functions in the pathway protein modification; protein ubiquitination. Component of SCF(ASK-cullin-F-box) E3 ubiquitin ligase complexes, which may mediate the ubiquitination and subsequent proteasomal degradation of target proteins. The polypeptide is F-box protein At1g67340 (Arabidopsis thaliana (Mouse-ear cress)).